We begin with the raw amino-acid sequence, 606 residues long: MRSNYCGALRNEHINSKVQLCGWVDRCRDHGGVIFIDLRDSSGTMQITVDPDQGTDLFNIAESLKNETVIQVTGKVRSRPEESINKKLETGQIEVLADVLKVLNPVYGNLPFAVSVHDDEPLKEEIRLKHRYLDLRRERMKKNLHLRHATIQTARNFLEEEGFIEVETPILTRSTPEGARDYLVPSRVCEGEWFALPQSPQIFKQLLMVGGIERYYQVARCFRDEDLRSDRQPEFTQLDMEMSFMSQEEILCLNERLIACIWKKIKGKDIKVPFPRLSWQESMDRYGTDRPDTRYGMELVDVSSIVKDIGFKVFSGAIQAGGSVKCIKVEEGNQSISNVRIKPGGDVFNEAQKAGAKGLAFIRVRVNNEIDTIGAIKDNLNNQQKNELLLKTKAKPGDLILFAAGDTEIVHKTLDKVRQFLAKELRLISTGKSKDQWNFLWVIDFPMFNFNKDEKRHEAMHHPFCAPNAKDIGGDPGLWEENLPKARAQAYDLVLNGLELGGGSLRIHNPELQQKVLETIGIAKDEATEQFGFLLNALEMGAPPHGGLAFGLDRIVMLLSEEDSIRDTIAFPKTQQARCLMAQAPNEVSKRQLKELHIASTWVDNE.

E177 contributes to the L-aspartate binding site. Residues 201–204 are aspartate; it reads QIFK. L-aspartate is bound at residue R223. Residues 223-225 and Q232 each bind ATP; that span reads RDE. H461 lines the L-aspartate pocket. An ATP-binding site is contributed by E499. R506 provides a ligand contact to L-aspartate. 551 to 554 provides a ligand contact to ATP; sequence GLDR.

The protein belongs to the class-II aminoacyl-tRNA synthetase family. Type 1 subfamily. Homodimer.

The protein resides in the cytoplasm. The enzyme catalyses tRNA(Asx) + L-aspartate + ATP = L-aspartyl-tRNA(Asx) + AMP + diphosphate. In terms of biological role, aspartyl-tRNA synthetase with relaxed tRNA specificity since it is able to aspartylate not only its cognate tRNA(Asp) but also tRNA(Asn). Reaction proceeds in two steps: L-aspartate is first activated by ATP to form Asp-AMP and then transferred to the acceptor end of tRNA(Asp/Asn). The sequence is that of Aspartate--tRNA(Asp/Asn) ligase from Prochlorococcus marinus (strain MIT 9211).